The following is a 316-amino-acid chain: Heme oxygenase 2 (316 aa).

Over residues 1–12 the composition is skewed to acidic residues; that stretch reads MSAEVETSEGVD. The disordered stretch occupies residues 1–29; it reads MSAEVETSEGVDESEKKNSGALEKENQMR. At serine 2 the chain carries N-acetylserine. Serine 2 carries the post-translational modification Phosphoserine. Positions 13–27 are enriched in basic and acidic residues; sequence ESEKKNSGALEKENQ. A heme b-binding site is contributed by histidine 45. HRM repeat units follow at residues 264-269 and 281-286; these read KCPFYA and SCPFRT. Residues cysteine 265 and cysteine 282 each carry the S-nitrosocysteine modification.

The protein belongs to the heme oxygenase family. Post-translationally, S-nitrosylated by BLVRB.

The protein resides in the microsome. It is found in the endoplasmic reticulum. The enzyme catalyses heme b + 3 reduced [NADPH--hemoprotein reductase] + 3 O2 = biliverdin IXalpha + CO + Fe(2+) + 3 oxidized [NADPH--hemoprotein reductase] + 3 H2O + H(+). In terms of biological role, heme oxygenase cleaves the heme ring at the alpha methene bridge to form biliverdin. Biliverdin is subsequently converted to bilirubin by biliverdin reductase. Under physiological conditions, the activity of heme oxygenase is highest in the spleen, where senescent erythrocytes are sequestrated and destroyed. Heme oxygenase 2 could be implicated in the production of carbon monoxide in brain where it could act as a neurotransmitter. The sequence is that of Heme oxygenase 2 (HMOX2) from Macaca fascicularis (Crab-eating macaque).